The chain runs to 263 residues: HTH-type transcriptional repressor NanR (263 aa).

The disordered stretch occupies residues 1-22 (MGLMNAFDSQTEDSSPAIGRNL). In terms of domain architecture, HTH gntR-type spans 30-98 (KKLSEMVEEE…NGERARVSRP (69 aa)). A DNA-binding region (H-T-H motif) is located at residues 58–77 (ERELMAFFNVGRPSVREALA).

It belongs to the NanR family.

Its function is as follows. Transcriptional repressor that controls expression of the genes required for the catabolism of sialic acids. The polypeptide is HTH-type transcriptional repressor NanR (Shigella dysenteriae serotype 1 (strain Sd197)).